The primary structure comprises 534 residues: MPSNMKQFCKISVWLQQHDPDLLEIINNLCMLGNLSAAKYKHGVTFIYPKQAKIRDEIKKHAYSNDPSQAIKTLESLILPFYIPTPMEFTGEIGSYTGVKLEVEKKEANKVILKNGEAVLIPAADFKPFPDRRLAVWIMESGSMPLEGPPYKRKKEGGGNDPPVSKHISPYTPRTRIAIEVEKAFDECMRQNWCSVNNPYLAKSVSLLSFLSLNHPTEFIKVLPLIDFDPLVTFYLLLEPYKTHGDDFLIPETILFGPTGWNGTDLYQSAMLEFKKFFTQITRQTFMDIADTATKEVDVPICYSDPETVHSYANHVRTEILHHNMVNKVTTPNLVVQAYNELEQTNTIRHYGPIFPESTINALRFWKKLWQDEQRFVIHGLHRTLMDQPTYETSEFAEIVRNLRFSRPGNNYINELNITSPAMYGDKHTTGDIAPNDRFAMLVAFINSTDFLYTAIPEEKVGGNDTQTGSQTSSLTDLVPTRLHSFLNHNLSKLKILNRAQQTVKNILSNDCLNQLKHYVKHTGKNEILKLLQE.

It belongs to the asfivirus polyprotein pp62 family. In terms of assembly, monomer. Predominantly exists as a monomer, with very little dimers. Homodimerization seems to be linked to low pH. Homodimer; disulfide-linked. Homotrimer; disulfide-linked. Homohexamer. Post-translationally, monoubiquitinated in vitro by viral UBCv1. In terms of processing, specific enzymatic cleavages in vivo by the viral pS273R protease yield mature proteins.

The protein resides in the host cytoplasm. Its subcellular location is the host perinuclear region. The protein localises to the virion. Functionally, essential for the correct assembly and maturation of the core of the virion. In terms of biological role, component of the core shell. Binds to phosphatidylserine, which may enable the core shell binding with the inner membrane. Its function is as follows. Component of the core shell. Binds to phosphatidylserine and DNA, which may link the core shell to the inner membrane and to the viral nucleoid. Component of the core shell. This chain is Polyprotein pp62, found in Ornithodoros (relapsing fever ticks).